Reading from the N-terminus, the 189-residue chain is Peptidyl-tRNA hydrolase (189 aa).

Tyr18 contributes to the tRNA binding site. His23 acts as the Proton acceptor in catalysis. Phe67, Asn69, and Asn115 together coordinate tRNA.

It belongs to the PTH family. As to quaternary structure, monomer.

The protein resides in the cytoplasm. It carries out the reaction an N-acyl-L-alpha-aminoacyl-tRNA + H2O = an N-acyl-L-amino acid + a tRNA + H(+). Hydrolyzes ribosome-free peptidyl-tRNAs (with 1 or more amino acids incorporated), which drop off the ribosome during protein synthesis, or as a result of ribosome stalling. Functionally, catalyzes the release of premature peptidyl moieties from peptidyl-tRNA molecules trapped in stalled 50S ribosomal subunits, and thus maintains levels of free tRNAs and 50S ribosomes. The polypeptide is Peptidyl-tRNA hydrolase (Leptospira borgpetersenii serovar Hardjo-bovis (strain JB197)).